The chain runs to 275 residues: 4-hydroxy-tetrahydrodipicolinate reductase (275 aa).

Residues 13–18 (GAGGKM) and 108–110 (GTT) contribute to the NAD(+) site. Histidine 164 serves as the catalytic Proton donor/acceptor. Residue histidine 165 participates in (S)-2,3,4,5-tetrahydrodipicolinate binding. Lysine 168 serves as the catalytic Proton donor. 174–175 (GT) provides a ligand contact to (S)-2,3,4,5-tetrahydrodipicolinate.

The protein belongs to the DapB family.

It localises to the cytoplasm. The catalysed reaction is (S)-2,3,4,5-tetrahydrodipicolinate + NAD(+) + H2O = (2S,4S)-4-hydroxy-2,3,4,5-tetrahydrodipicolinate + NADH + H(+). The enzyme catalyses (S)-2,3,4,5-tetrahydrodipicolinate + NADP(+) + H2O = (2S,4S)-4-hydroxy-2,3,4,5-tetrahydrodipicolinate + NADPH + H(+). It functions in the pathway amino-acid biosynthesis; L-lysine biosynthesis via DAP pathway; (S)-tetrahydrodipicolinate from L-aspartate: step 4/4. Its function is as follows. Catalyzes the conversion of 4-hydroxy-tetrahydrodipicolinate (HTPA) to tetrahydrodipicolinate. The polypeptide is 4-hydroxy-tetrahydrodipicolinate reductase (Picosynechococcus sp. (strain ATCC 27264 / PCC 7002 / PR-6) (Agmenellum quadruplicatum)).